The sequence spans 130 residues: Lysozyme C, kidney isozyme (130 aa).

Residues 1–130 (KVFERCELAR…LTSYIQGCGV (130 aa)) form the C-type lysozyme domain. 4 cysteine pairs are disulfide-bonded: Cys-6–Cys-128, Cys-30–Cys-116, Cys-65–Cys-81, and Cys-77–Cys-95. Residues Glu-35 and Asp-53 contribute to the active site.

Belongs to the glycosyl hydrolase 22 family. In terms of assembly, monomer.

It localises to the secreted. The catalysed reaction is Hydrolysis of (1-&gt;4)-beta-linkages between N-acetylmuramic acid and N-acetyl-D-glucosamine residues in a peptidoglycan and between N-acetyl-D-glucosamine residues in chitodextrins.. Lysozymes have primarily a bacteriolytic function; those in tissues and body fluids are associated with the monocyte-macrophage system and enhance the activity of immunoagents. The chain is Lysozyme C, kidney isozyme from Ovis aries (Sheep).